A 270-amino-acid chain; its full sequence is Regulatory protein RecX (270 aa).

It belongs to the RecX family.

The protein localises to the cytoplasm. Its function is as follows. Modulates RecA activity. This is Regulatory protein RecX from Bacillus anthracis (strain A0248).